The chain runs to 254 residues: Proline-rich protein 23A3 (254 aa).

Disordered regions lie at residues 1–50, 161–196, and 212–254; these read MLRT…LEAP, ASPPDDQANGNFSSIPGVPSPLSQDQVPGPSTGAEQ, and PFPG…LVYE. Over residues 35–50 the composition is skewed to low complexity; that stretch reads EPACPEPLAQPELEAP. Over residues 214–241 the composition is skewed to pro residues; the sequence is PGSPLQPLPPSPSRNPQEQLPPCPPCSP. A compositionally biased stretch (basic residues) spans 243 to 254; that stretch reads APRRARKRLVYE.

Belongs to the PRR23 family.

The sequence is that of Proline-rich protein 23A3 from Mus musculus (Mouse).